The sequence spans 1671 residues: Hybrid signal transduction protein dokA (1671 aa).

A compositionally biased stretch (basic and acidic residues) spans 1–10 (MSSPHIELHS). Disordered stretches follow at residues 1–27 (MSSP…ELTG), 42–89 (DDLN…DKND), 126–241 (QQQQ…RRSS), 365–451 (YSNN…NNEE), 579–603 (HNHN…SPFI), and 629–651 (SNSS…SSNA). Positions 11 to 27 (QRTLSPQPSSNNFELTG) are enriched in polar residues. 2 stretches are compositionally biased toward low complexity: residues 45–83 (NNNN…NNNN) and 126–167 (QQQQ…QQQE). Residues 168 to 179 (QEQEQEQEQEQE) are compositionally biased toward acidic residues. Positions 367-449 (NNNNNTNTNN…NNNNNNNNNN (83 aa)) are enriched in low complexity. Residues 591–600 (TTQRASSTDS) are compositionally biased toward polar residues. Residues 1050-1276 (NISHELRTPC…TFWFAIKVSI (227 aa)) enclose the Histidine kinase domain. The 115-residue stretch at 1519 to 1633 (YILVAEDNDI…RLQKTLSDWI (115 aa)) folds into the Response regulatory domain.

Under osmotic stress conditions, this protein undergoes phosphorylation at a serine residue in the kinase core, which is not due to an autophosphorylation of dokA. This is in contrast to the classic two-component paradigm, which predicts only histidine and aspartate phosphorylation.

Its function is as follows. Part of the osmoregulatory pathway which leads to the increase of intracellular cAMP concentration in response to hyperosmotic stress. Thought to negatively regulate the rdeA-regA pathway by acting as a phosphatase towards the HPt protein rdeA. Has probably no histidine kinase activity. The sequence is that of Hybrid signal transduction protein dokA (dokA) from Dictyostelium discoideum (Social amoeba).